Reading from the N-terminus, the 62-residue chain is MSIVFQFFLIALVLFSLLMVIGVPVAYASPQNWDQSKPLLYVGSAIWAILVVAVAILNFLVI.

The next 2 helical transmembrane spans lie at 8-28 and 41-61; these read FLIALVLFSLLMVIGVPVAYA and YVGSAIWAILVVAVAILNFLV.

The protein belongs to the PsbZ family. In terms of assembly, PSII is composed of 1 copy each of membrane proteins PsbA, PsbB, PsbC, PsbD, PsbE, PsbF, PsbH, PsbI, PsbJ, PsbK, PsbL, PsbM, PsbT, PsbX, PsbY, PsbZ, Psb30/Ycf12, peripheral proteins PsbO, CyanoQ (PsbQ), PsbU, PsbV and a large number of cofactors. It forms dimeric complexes.

It is found in the cellular thylakoid membrane. Its function is as follows. May control the interaction of photosystem II (PSII) cores with the light-harvesting antenna, regulates electron flow through the 2 photosystem reaction centers. PSII is a light-driven water plastoquinone oxidoreductase, using light energy to abstract electrons from H(2)O, generating a proton gradient subsequently used for ATP formation. This Microcystis aeruginosa (strain NIES-843 / IAM M-2473) protein is Photosystem II reaction center protein Z.